Consider the following 817-residue polypeptide: Probable beta-glucosidase G (817 aa).

The signal sequence occupies residues 1 to 20; sequence MANIAHLIVSGLLAATVAHG. Residues N40, N58, N229, and N276 are each glycosylated (N-linked (GlcNAc...) asparagine). Residue D304 is part of the active site. N-linked (GlcNAc...) asparagine glycosylation is found at N343, N350, N402, N507, N563, N584, N623, N662, N679, and N715.

It belongs to the glycosyl hydrolase 3 family.

It is found in the secreted. It catalyses the reaction Hydrolysis of terminal, non-reducing beta-D-glucosyl residues with release of beta-D-glucose.. It functions in the pathway glycan metabolism; cellulose degradation. Functionally, beta-glucosidases are one of a number of cellulolytic enzymes involved in the degradation of cellulosic biomass. Catalyzes the last step releasing glucose from the inhibitory cellobiose. In Aspergillus terreus (strain NIH 2624 / FGSC A1156), this protein is Probable beta-glucosidase G (bglG).